The sequence spans 255 residues: Coenzyme F420:L-glutamate ligase (255 aa).

Residues 11 to 14 (IPLI), 40 to 41 (ST), and K45 contribute to the GTP site. D109 lines the a divalent metal cation pocket. Residue N112 coordinates GTP. Residues D150, T151, and E208 each coordinate a divalent metal cation. GTP is bound at residue 206–213 (MGEGAGGT).

This sequence belongs to the CofE family. Homodimer. Mg(2+) is required as a cofactor. The cofactor is Mn(2+). Requires K(+) as cofactor.

It carries out the reaction oxidized coenzyme F420-0 + GTP + L-glutamate = oxidized coenzyme F420-1 + GDP + phosphate + H(+). It catalyses the reaction oxidized coenzyme F420-1 + GTP + L-glutamate = oxidized coenzyme F420-2 + GDP + phosphate + H(+). It participates in cofactor biosynthesis; coenzyme F420 biosynthesis. Catalyzes the GTP-dependent successive addition of two or more gamma-linked L-glutamates to the L-lactyl phosphodiester of 7,8-didemethyl-8-hydroxy-5-deazariboflavin (F420-0) to form coenzyme F420-0-glutamyl-glutamate (F420-2) or polyglutamated F420 derivatives. This Methanosarcina barkeri (strain Fusaro / DSM 804) protein is Coenzyme F420:L-glutamate ligase.